Here is a 244-residue protein sequence, read N- to C-terminus: 6-carboxyhexanoate--CoA ligase (244 aa).

It belongs to the BioW family. In terms of assembly, homodimer. Mg(2+) serves as cofactor.

It carries out the reaction heptanedioate + ATP + CoA = 6-carboxyhexanoyl-CoA + AMP + diphosphate. It functions in the pathway metabolic intermediate metabolism; pimeloyl-CoA biosynthesis; pimeloyl-CoA from pimelate: step 1/1. Its function is as follows. Catalyzes the transformation of pimelate into pimeloyl-CoA with concomitant hydrolysis of ATP to AMP. In Methanococcus maripaludis (strain C6 / ATCC BAA-1332), this protein is 6-carboxyhexanoate--CoA ligase.